The primary structure comprises 298 residues: tRNA pseudouridine synthase B (298 aa).

Asp45 serves as the catalytic Nucleophile.

Belongs to the pseudouridine synthase TruB family. Type 1 subfamily.

The enzyme catalyses uridine(55) in tRNA = pseudouridine(55) in tRNA. Its function is as follows. Responsible for synthesis of pseudouridine from uracil-55 in the psi GC loop of transfer RNAs. The protein is tRNA pseudouridine synthase B of Thiobacillus denitrificans (strain ATCC 25259 / T1).